The chain runs to 467 residues: UDP-N-acetylmuramate--L-alanine ligase (467 aa).

114-120 (GTHGKTT) serves as a coordination point for ATP.

It belongs to the MurCDEF family.

It localises to the cytoplasm. The catalysed reaction is UDP-N-acetyl-alpha-D-muramate + L-alanine + ATP = UDP-N-acetyl-alpha-D-muramoyl-L-alanine + ADP + phosphate + H(+). It functions in the pathway cell wall biogenesis; peptidoglycan biosynthesis. In terms of biological role, cell wall formation. The sequence is that of UDP-N-acetylmuramate--L-alanine ligase from Azorhizobium caulinodans (strain ATCC 43989 / DSM 5975 / JCM 20966 / LMG 6465 / NBRC 14845 / NCIMB 13405 / ORS 571).